The chain runs to 270 residues: Putative phosphoenolpyruvate synthase regulatory protein (270 aa).

Residue 150–157 (GVSRCGKT) coordinates ADP.

It belongs to the pyruvate, phosphate/water dikinase regulatory protein family. PSRP subfamily.

It carries out the reaction [pyruvate, water dikinase] + ADP = [pyruvate, water dikinase]-phosphate + AMP + H(+). The enzyme catalyses [pyruvate, water dikinase]-phosphate + phosphate + H(+) = [pyruvate, water dikinase] + diphosphate. Bifunctional serine/threonine kinase and phosphorylase involved in the regulation of the phosphoenolpyruvate synthase (PEPS) by catalyzing its phosphorylation/dephosphorylation. The chain is Putative phosphoenolpyruvate synthase regulatory protein from Shewanella halifaxensis (strain HAW-EB4).